The following is a 372-amino-acid chain: Trihelix transcription factor GT-4 (372 aa).

The region spanning 47 to 111 is the Myb-like domain; it reads APKKRAETWA…MCTDKWRNIL (65 aa). Position 167 is a phosphoserine (Ser-167).

The protein localises to the nucleus. In terms of biological role, probable transcription factor that binds specific DNA sequence. This chain is Trihelix transcription factor GT-4 (GT-4), found in Arabidopsis thaliana (Mouse-ear cress).